Consider the following 313-residue polypeptide: 3-ketodihydrosphingosine reductase TSC10 (313 aa).

Residue L12 participates in NADP(+) binding. 3 residues coordinate NADPH: G15, S17, and G19. Positions 15–19 match the GXSXG motif; sequence GGSQG. L20 contacts NADP(+). The NADPH site is built by R47, K51, and D86. D86 contributes to the NADP(+) binding site. S160 serves as the catalytic Proton donor. NADP(+) contacts are provided by Y174, K178, and S207. The Proton acceptor role is filled by Y174. K178 acts as the Lowers pKa of active site Tyr in catalysis. The helical transmembrane segment at 278–298 threads the bilayer; the sequence is VFSWILGALLNITIVPIYMLI.

It belongs to the short-chain dehydrogenases/reductases (SDR) family.

The protein resides in the endoplasmic reticulum membrane. It catalyses the reaction sphinganine + NADP(+) = 3-oxosphinganine + NADPH + H(+). It participates in lipid metabolism; sphingolipid metabolism. Its function is as follows. Catalyzes the reduction of 3'-oxosphinganine (3-ketodihydrosphingosine/KDS) to sphinganine (dihydrosphingosine/DHS), the second step of de novo sphingolipid biosynthesis. The chain is 3-ketodihydrosphingosine reductase TSC10 (TSC10) from Kluyveromyces lactis (strain ATCC 8585 / CBS 2359 / DSM 70799 / NBRC 1267 / NRRL Y-1140 / WM37) (Yeast).